Reading from the N-terminus, the 177-residue chain is Large ribosomal subunit protein uL6 (177 aa).

This sequence belongs to the universal ribosomal protein uL6 family. Part of the 50S ribosomal subunit.

This protein binds to the 23S rRNA, and is important in its secondary structure. It is located near the subunit interface in the base of the L7/L12 stalk, and near the tRNA binding site of the peptidyltransferase center. This is Large ribosomal subunit protein uL6 from Mesorhizobium japonicum (strain LMG 29417 / CECT 9101 / MAFF 303099) (Mesorhizobium loti (strain MAFF 303099)).